The sequence spans 191 residues: Fe/S biogenesis protein NfuA (191 aa).

[4Fe-4S] cluster contacts are provided by Cys149 and Cys152.

Belongs to the NfuA family. Homodimer. [4Fe-4S] cluster serves as cofactor.

In terms of biological role, involved in iron-sulfur cluster biogenesis. Binds a 4Fe-4S cluster, can transfer this cluster to apoproteins, and thereby intervenes in the maturation of Fe/S proteins. Could also act as a scaffold/chaperone for damaged Fe/S proteins. In Cronobacter sakazakii (strain ATCC BAA-894) (Enterobacter sakazakii), this protein is Fe/S biogenesis protein NfuA.